Reading from the N-terminus, the 340-residue chain is Uroporphyrinogen decarboxylase (340 aa).

Residues 21-25 (RQAGR), aspartate 71, tyrosine 148, serine 203, and histidine 316 each bind substrate.

Belongs to the uroporphyrinogen decarboxylase family. As to quaternary structure, homodimer.

It localises to the cytoplasm. It catalyses the reaction uroporphyrinogen III + 4 H(+) = coproporphyrinogen III + 4 CO2. It participates in porphyrin-containing compound metabolism; protoporphyrin-IX biosynthesis; coproporphyrinogen-III from 5-aminolevulinate: step 4/4. Its function is as follows. Catalyzes the decarboxylation of four acetate groups of uroporphyrinogen-III to yield coproporphyrinogen-III. This is Uroporphyrinogen decarboxylase from Campylobacter jejuni (strain RM1221).